Consider the following 39-residue polypeptide: Cytochrome b559 subunit beta (39 aa).

A helical membrane pass occupies residues 14–30 (WLAIHGLAVPTVFFLGS). His18 is a heme binding site.

This sequence belongs to the PsbE/PsbF family. In terms of assembly, heterodimer of an alpha subunit and a beta subunit. PSII is composed of 1 copy each of membrane proteins PsbA, PsbB, PsbC, PsbD, PsbE, PsbF, PsbH, PsbI, PsbJ, PsbK, PsbL, PsbM, PsbT, PsbX, PsbY, PsbZ, Psb30/Ycf12, at least 3 peripheral proteins of the oxygen-evolving complex and a large number of cofactors. It forms dimeric complexes. Heme b serves as cofactor.

It is found in the plastid. The protein localises to the chloroplast thylakoid membrane. This b-type cytochrome is tightly associated with the reaction center of photosystem II (PSII). PSII is a light-driven water:plastoquinone oxidoreductase that uses light energy to abstract electrons from H(2)O, generating O(2) and a proton gradient subsequently used for ATP formation. It consists of a core antenna complex that captures photons, and an electron transfer chain that converts photonic excitation into a charge separation. The sequence is that of Cytochrome b559 subunit beta from Staurastrum punctulatum (Green alga).